We begin with the raw amino-acid sequence, 481 residues long: Sucrose phosphorylase (481 aa).

Sucrose is bound by residues Asp49, His87, Arg191–Asp193, Glu234, His291–Asp292, Asp335–Gln338, and Arg392. Asp193 functions as the Nucleophile in the catalytic mechanism. Glu234 functions as the Proton donor in the catalytic mechanism.

The protein belongs to the glycosyl hydrolase 13 family. Sucrose phosphorylase subfamily.

It localises to the cytoplasm. The enzyme catalyses sucrose + phosphate = D-fructose + alpha-D-glucose 1-phosphate. Its function is as follows. Intracellular catabolism of sucrose. Being intracellular, probably not involved in synthesis of extracellular polysaccharides. The protein is Sucrose phosphorylase of Streptococcus mutans serotype c (strain ATCC 700610 / UA159).